Consider the following 154-residue polypeptide: MTIEVQENREPKIIEVTEIMKMLPHRYPFLLVDRVIDFEEGKWLKAIKNVTVNEPCFTGHFPESPIFPGVLILEAMAQATGVLAVATHGKMAQDELYYFAAIDNARFKRPVVPGDQLTFEVEFLKEMRGITKFTGKAFVDGKLVCEADLMCARK.

His60 is a catalytic residue.

This sequence belongs to the thioester dehydratase family. FabZ subfamily.

It localises to the cytoplasm. The enzyme catalyses a (3R)-hydroxyacyl-[ACP] = a (2E)-enoyl-[ACP] + H2O. In terms of biological role, involved in unsaturated fatty acids biosynthesis. Catalyzes the dehydration of short chain beta-hydroxyacyl-ACPs and long chain saturated and unsaturated beta-hydroxyacyl-ACPs. This Actinobacillus pleuropneumoniae serotype 5b (strain L20) protein is 3-hydroxyacyl-[acyl-carrier-protein] dehydratase FabZ.